We begin with the raw amino-acid sequence, 436 residues long: Hydrogenobyrinate a,c-diamide synthase (436 aa).

In terms of domain architecture, GATase cobBQ-type spans 244–435 (RIAVARDDAF…MHVIDFSGEA (192 aa)). Residue C327 is the Nucleophile of the active site.

This sequence belongs to the CobB/CbiA family. It depends on Mg(2+) as a cofactor.

It catalyses the reaction hydrogenobyrinate + 2 L-glutamine + 2 ATP + 2 H2O = hydrogenobyrinate a,c-diamide + 2 L-glutamate + 2 ADP + 2 phosphate + 2 H(+). Its pathway is cofactor biosynthesis; adenosylcobalamin biosynthesis; cob(II)yrinate a,c-diamide from precorrin-2 (aerobic route): step 9/10. Functionally, catalyzes the ATP-dependent amidation of the two carboxylate groups at positions a and c of hydrogenobyrinate, using either L-glutamine or ammonia as the nitrogen source. The polypeptide is Hydrogenobyrinate a,c-diamide synthase (Brucella ovis (strain ATCC 25840 / 63/290 / NCTC 10512)).